Here is a 173-residue protein sequence, read N- to C-terminus: Crossover junction endodeoxyribonuclease RuvC (173 aa).

Active-site residues include Asp11, Glu71, and Asp143. Residues Asp11, Glu71, and Asp143 each coordinate Mg(2+).

The protein belongs to the RuvC family. In terms of assembly, homodimer which binds Holliday junction (HJ) DNA. The HJ becomes 2-fold symmetrical on binding to RuvC with unstacked arms; it has a different conformation from HJ DNA in complex with RuvA. In the full resolvosome a probable DNA-RuvA(4)-RuvB(12)-RuvC(2) complex forms which resolves the HJ. Mg(2+) is required as a cofactor.

It localises to the cytoplasm. The enzyme catalyses Endonucleolytic cleavage at a junction such as a reciprocal single-stranded crossover between two homologous DNA duplexes (Holliday junction).. The RuvA-RuvB-RuvC complex processes Holliday junction (HJ) DNA during genetic recombination and DNA repair. Endonuclease that resolves HJ intermediates. Cleaves cruciform DNA by making single-stranded nicks across the HJ at symmetrical positions within the homologous arms, yielding a 5'-phosphate and a 3'-hydroxyl group; requires a central core of homology in the junction. The consensus cleavage sequence is 5'-(A/T)TT(C/G)-3'. Cleavage occurs on the 3'-side of the TT dinucleotide at the point of strand exchange. HJ branch migration catalyzed by RuvA-RuvB allows RuvC to scan DNA until it finds its consensus sequence, where it cleaves and resolves the cruciform DNA. This chain is Crossover junction endodeoxyribonuclease RuvC, found in Brucella abortus (strain 2308).